The chain runs to 673 residues: Xaa-Pro aminopeptidase 2 (673 aa).

The N-terminal stretch at 1-21 is a signal peptide; the sequence is MAQACWGCYPWLVLICACAWG. N34, N48, and N64 each carry an N-linked (GlcNAc...) asparagine glycan. Position 115 (R115) interacts with substrate. 3 N-linked (GlcNAc...) asparagine glycosylation sites follow: N277, N290, and N294. Substrate is bound at residue H429. Residue D449 coordinates Mn(2+). Zn(2+)-binding residues include D449, D460, and H523. Substrate contacts are provided by H523, H532, and E554. The Zn(2+) site is built by E554 and E568. Residue A649 is the site of GPI-anchor amidated alanine attachment. Residues 650-673 constitute a propeptide, removed in mature form; it reads RAAPTTSLGSLMTVSALAILGWSV.

Belongs to the peptidase M24B family. As to quaternary structure, homotrimer. The cofactor is Zn(2+). Post-translationally, N-glycosylated. In terms of tissue distribution, kidney.

The protein localises to the cell membrane. It carries out the reaction Release of any N-terminal amino acid, including proline, that is linked to proline, even from a dipeptide or tripeptide.. Inhibited by apstatin and the metal ion chelator EDTA. Potently inhibited by the converting enzyme inhibitors cilazaprilat; enalaprilat; L155,212; ramiprilat and YS 980. Also inhibited to a lesser extent by indolaprilat; quinaprilat; spiraprilat; captopril and zofenoprilat. In terms of biological role, membrane-bound metalloprotease which catalyzes the removal of a penultimate prolyl residue from the N-termini of peptides, such as Arg-Pro-Pro. May play a role in the metabolism of the vasodilator bradykinin. This chain is Xaa-Pro aminopeptidase 2 (XPNPEP2), found in Sus scrofa (Pig).